The primary structure comprises 155 residues: MAKLAVIRIRGRVNVKRPVRDTLAMLRLHRVNHCVIVDDTPSYLGMLQKAKDYITWGEINAETLAKLIRKRGKLIGNKPVTDEYVKEKLGMTIEEFAQKVINGEMSLKDLPNLKPVFRLHPPRGGFKGSKKRSFQEGGALGYRGEKINELIERML.

This sequence belongs to the universal ribosomal protein uL30 family. As to quaternary structure, part of the 50S ribosomal subunit.

The sequence is that of Large ribosomal subunit protein uL30 from Pyrococcus horikoshii (strain ATCC 700860 / DSM 12428 / JCM 9974 / NBRC 100139 / OT-3).